The primary structure comprises 445 residues: 3-phosphoshikimate 1-carboxyvinyltransferase (445 aa).

The segment at 1–25 (MTDSNQPMPLQARKSGALHGTARVP) is disordered. 3-phosphoshikimate contacts are provided by Lys28, Ser29, and Arg33. Lys28 is a phosphoenolpyruvate binding site. The phosphoenolpyruvate site is built by Gly101 and Arg129. 3-phosphoshikimate contacts are provided by Ser175, Gln177, Asp328, and Lys355. Gln177 serves as a coordination point for phosphoenolpyruvate. Asp328 (proton acceptor) is an active-site residue. Phosphoenolpyruvate contacts are provided by Arg359 and Arg402.

It belongs to the EPSP synthase family. In terms of assembly, monomer.

The protein resides in the cytoplasm. The enzyme catalyses 3-phosphoshikimate + phosphoenolpyruvate = 5-O-(1-carboxyvinyl)-3-phosphoshikimate + phosphate. The protein operates within metabolic intermediate biosynthesis; chorismate biosynthesis; chorismate from D-erythrose 4-phosphate and phosphoenolpyruvate: step 6/7. In terms of biological role, catalyzes the transfer of the enolpyruvyl moiety of phosphoenolpyruvate (PEP) to the 5-hydroxyl of shikimate-3-phosphate (S3P) to produce enolpyruvyl shikimate-3-phosphate and inorganic phosphate. The polypeptide is 3-phosphoshikimate 1-carboxyvinyltransferase (Rhodopseudomonas palustris (strain ATCC BAA-98 / CGA009)).